A 300-amino-acid polypeptide reads, in one-letter code: Ribosomal protein bS6--L-glutamate ligase (300 aa).

The 184-residue stretch at Met104–Glu287 folds into the ATP-grasp domain. Residues Lys141, Glu178–Tyr179, Asp187, and Arg211–Asn213 contribute to the ATP site. The Mg(2+) site is built by Asp248, Glu260, and Asn262. Mn(2+) contacts are provided by Asp248, Glu260, and Asn262.

This sequence belongs to the RimK family. Mg(2+) serves as cofactor. Mn(2+) is required as a cofactor.

Its function is as follows. An L-glutamate ligase that catalyzes the ATP-dependent post-translational addition of glutamate residues to the C-terminus of ribosomal protein bS6 (RpsF). Is also able to catalyze the synthesis of poly-alpha-glutamate in vitro, via ATP hydrolysis from unprotected glutamate as substrate. The number of glutamate residues added to either RpsF or to poly-alpha-glutamate changes with pH. This is Ribosomal protein bS6--L-glutamate ligase from Escherichia coli O139:H28 (strain E24377A / ETEC).